The chain runs to 843 residues: Receptor-like serine/threonine-protein kinase SD1-7 (843 aa).

A signal peptide spans 1-31 (MRSVPNYHHSFFIFLILILFLAFSVSPNTLS). The 120-residue stretch at 32-151 (ATESLTISSN…NNRLLWQSFD (120 aa)) folds into the Bulb-type lectin domain. Residues 32–435 (ATESLTISSN…LEDKRIKNEK (404 aa)) are Extracellular-facing. N-linked (GlcNAc...) asparagine glycans are attached at residues N41, N92, N116, N236, and N251. The 37-residue stretch at 286–322 (PKDLCDNYKVCGNFGYCDSNSLPNCYCIKGFKPVNEQ) folds into the EGF-like; atypical domain. Cystine bridges form between C290/C302, C296/C310, C372/C397, and C376/C382. The PAN domain occupies 341–422 (CDGRDGFTRL…GGQDLYVRLA (82 aa)). A glycan (N-linked (GlcNAc...) asparagine) is linked at N381. The chain crosses the membrane as a helical span at residues 436–456 (IIGSSIGVSILLLLSFVIFHF). The Cytoplasmic segment spans residues 457 to 843 (WKRKQKRSIT…QITLSVIDAR (387 aa)). The Protein kinase domain occupies 519 to 809 (FSNDNKLGQG…AIPQPKRPGF (291 aa)). ATP contacts are provided by residues 525-533 (LGQGGFGIV) and K547. The residue at position 553 (S553) is a Phosphoserine. The caM-binding stretch occupies residues 608–625 (TRSSNLNWQKRFDIINGI). D644 acts as the Proton acceptor in catalysis. 2 positions are modified to phosphoserine: S648 and S661. Residue T678 is modified to Phosphothreonine. A Phosphoserine modification is found at S820.

The protein belongs to the protein kinase superfamily. Ser/Thr protein kinase family. In terms of assembly, interacts with PUB9, PUB13, PUB14 and PUB38. Post-translationally, autophosphorylated on serine and threonine residues. Mostly expressed in leaves, and, to a lower extent, in stems and flower buds.

The protein resides in the cell membrane. It catalyses the reaction L-seryl-[protein] + ATP = O-phospho-L-seryl-[protein] + ADP + H(+). The catalysed reaction is L-threonyl-[protein] + ATP = O-phospho-L-threonyl-[protein] + ADP + H(+). Functionally, involved in the regulation of cellular expansion and differentiation. Mediates subcellular relocalization of PUB9 from nucleus to plasma membrane in a protein-phosphorylation-dependent manner. May be involved in the abscisic acid-mediated signaling pathway, at least during germination. This is Receptor-like serine/threonine-protein kinase SD1-7 (SD17) from Arabidopsis thaliana (Mouse-ear cress).